The primary structure comprises 555 residues: Protein tyrosine phosphatase-like protein egg-3 (555 aa).

Short sequence motifs (D-box) lie at residues 96-99 (RILL) and 130-133 (RDRL). The 308-residue stretch at 207-514 (FVQEFNRLDR…LFIYRVILRW (308 aa)) folds into the Tyrosine-protein phosphatase domain. The short motif at 253-256 (RVKL) is the RXXL motif; required for cortical localization element. Residues 266-269 (RNEL) carry the RXXL motif motif. Short sequence motifs (RXXL motif; required for cortical localization) lie at residues 509 to 512 (RVIL) and 525 to 528 (RAAL).

Belongs to the protein-tyrosine phosphatase family. As to quaternary structure, part of a complex, consisting of pseudophosphatases egg-3, egg-4, egg-5 and kinase mbk-2; this complex is required for the oocyte-to-zygote transition. Interacts (via tyrosine-protein phosphatase domain) with kinase mbk-2 (via N-terminus); the interaction does not affect mbk-2 kinase activity, is enhanced by mbk-2 tyrosine phosphorylation status and requires prior binding of mbk-2 to egg-4 and egg-5. Interacts with egg-4.

Its subcellular location is the cytoplasm. It localises to the cell cortex. Functionally, probable pseudophosphatase required for the oocyte-to-zygote transition during which it regulates the polarized dispersal of the cortical actin cytoskeleton, the synthesis of the eggshell chitin layer and the formation of the polar bodies after meiosis I and II. Acts as a scaffold to tether kinase mbk-2 and pseudophosphatases egg-4 and egg-5 to the oocyte cortex and thus restricts mbk-2 activity to the cortex during meiosis I. Regulates mbk-2 localization to cytoplasmic foci during meiosis II. Also required for chitin synthase chs-1 localization to the cell cortex of unfertilized oocytes and to cytoplasmic foci in the fertilized embryo. The polypeptide is Protein tyrosine phosphatase-like protein egg-3 (Caenorhabditis elegans).